The primary structure comprises 377 residues: tRNA/tmRNA (uracil-C(5))-methyltransferase (377 aa).

Positions 199, 227, 232, 248, and 308 each coordinate S-adenosyl-L-methionine. The active-site Nucleophile is C333. The active-site Proton acceptor is E367.

Belongs to the class I-like SAM-binding methyltransferase superfamily. RNA M5U methyltransferase family. TrmA subfamily.

The enzyme catalyses uridine(54) in tRNA + S-adenosyl-L-methionine = 5-methyluridine(54) in tRNA + S-adenosyl-L-homocysteine + H(+). It catalyses the reaction uridine(341) in tmRNA + S-adenosyl-L-methionine = 5-methyluridine(341) in tmRNA + S-adenosyl-L-homocysteine + H(+). Functionally, dual-specificity methyltransferase that catalyzes the formation of 5-methyluridine at position 54 (m5U54) in all tRNAs, and that of position 341 (m5U341) in tmRNA (transfer-mRNA). The sequence is that of tRNA/tmRNA (uracil-C(5))-methyltransferase from Aeromonas salmonicida (strain A449).